The primary structure comprises 356 residues: Phosphoribosylformylglycinamidine cyclo-ligase (356 aa).

It belongs to the AIR synthase family.

The protein localises to the cytoplasm. It carries out the reaction 2-formamido-N(1)-(5-O-phospho-beta-D-ribosyl)acetamidine + ATP = 5-amino-1-(5-phospho-beta-D-ribosyl)imidazole + ADP + phosphate + H(+). It functions in the pathway purine metabolism; IMP biosynthesis via de novo pathway; 5-amino-1-(5-phospho-D-ribosyl)imidazole from N(2)-formyl-N(1)-(5-phospho-D-ribosyl)glycinamide: step 2/2. In Desulfotalea psychrophila (strain LSv54 / DSM 12343), this protein is Phosphoribosylformylglycinamidine cyclo-ligase.